The primary structure comprises 151 residues: 3-hydroxyacyl-[acyl-carrier-protein] dehydratase FabZ (151 aa).

His54 is a catalytic residue.

The protein belongs to the thioester dehydratase family. FabZ subfamily.

It localises to the cytoplasm. It carries out the reaction a (3R)-hydroxyacyl-[ACP] = a (2E)-enoyl-[ACP] + H2O. Involved in unsaturated fatty acids biosynthesis. Catalyzes the dehydration of short chain beta-hydroxyacyl-ACPs and long chain saturated and unsaturated beta-hydroxyacyl-ACPs. This Salmonella agona (strain SL483) protein is 3-hydroxyacyl-[acyl-carrier-protein] dehydratase FabZ.